We begin with the raw amino-acid sequence, 435 residues long: Type A flavoprotein fprA (435 aa).

A zinc metallo-hydrolase region spans residues 48-228 (ANGTTYNAYA…PFRSFVAQVL (181 aa)). Residues His98, Glu100, Asp102, His167, Asp186, and His243 each coordinate Fe cation. The region spanning 276-415 (LLIFYVSAYR…EGRAFGRRLA (140 aa)) is the Flavodoxin-like domain.

It in the N-terminal section; belongs to the zinc metallo-hydrolase group 3 family. As to quaternary structure, homodimer. It depends on FMN as a cofactor. Fe cation is required as a cofactor.

Functionally, low-potential electron donor to a number of redox enzymes. This Rhodobacter capsulatus (Rhodopseudomonas capsulata) protein is Type A flavoprotein fprA (fprA).